The chain runs to 598 residues: MRALLTFFVAGLLVLSSPAMALFGNNQNSSFASGSNDFVPVDQAFPFNYFQQDHRITLDWQVKEGYYLYQQRLSFSAENVVLGDIQMENGQPYRDEFFGDVNIYTNPLFVNIPMQDWQPGAKLIVQYQGCAKAGFCYPPETRVIDIASFTNGDMAPATMPTQTASPLDTSTANTSTPQPLTQQDQLASGLADNWWTPLLFLALGVGLAFTPCVLPMYPILTSIVLGSGKLSQRRALGLSLVYVQGMALTYTLLGLVVASAGLQFQAAMQHPYVLIGLSILFVTLALSMFGVYTLQLPSSVQTWLNNLSNKQQGGSSTGVFAMGAISGLVCSPCTTAPLSGALLYVAQSGDLLTGGVALYALAMGMGIPLILVAVFGNKLLPKAGGWMDHVKTLFGFVLLAAPIFLLERILPEMWSTALWSALGIAAFGWLYHVKNSLEFGGWKQSAVGIIAVLGLFASAQPALNYWFADSSQQAQTSEVSFIKIRNVEELQQQLALAKQAKKPVMLDFYADWCVACKEFEKYTFHDPAVAAQLKQFVLLQADVTRNQAQDIELLQAQQVLGLPTIDFWDAQGNPVSNARLTGFMQAAPFLEHIQRISN.

An N-terminal signal peptide occupies residues 1–21; sequence MRALLTFFVAGLLVLSSPAMA. A disulfide bridge connects residues C130 and C136. Residues 158–180 are disordered; that stretch reads TMPTQTASPLDTSTANTSTPQPL. Positions 159 to 180 are enriched in polar residues; that stretch reads MPTQTASPLDTSTANTSTPQPL. 8 helical membrane-spanning segments follow: residues 198–220, 240–262, 274–296, 324–346, 353–375, 385–407, 414–431, and 446–468; these read LLFL…YPIL, LVYV…SAGL, LIGL…TLQL, AISG…LYVA, TGGV…VAVF, GWMD…FLLE, WSTA…GWLY, and AVGI…YWFA. An intrachain disulfide couples C212 to C333. The 143-residue stretch at 456-598 folds into the Thioredoxin domain; the sequence is FASAQPALNY…FLEHIQRISN (143 aa). C513 and C516 are oxidised to a cystine.

It belongs to the thioredoxin family. DsbD subfamily.

It localises to the cell inner membrane. It catalyses the reaction [protein]-dithiol + NAD(+) = [protein]-disulfide + NADH + H(+). The catalysed reaction is [protein]-dithiol + NADP(+) = [protein]-disulfide + NADPH + H(+). Its function is as follows. Required to facilitate the formation of correct disulfide bonds in some periplasmic proteins and for the assembly of the periplasmic c-type cytochromes. Acts by transferring electrons from cytoplasmic thioredoxin to the periplasm. This transfer involves a cascade of disulfide bond formation and reduction steps. The protein is Thiol:disulfide interchange protein DsbD of Vibrio vulnificus (strain YJ016).